Here is a 312-residue protein sequence, read N- to C-terminus: MPRLLATQSHVVHGYVGNKAATFPLQCLGWDVDCCNSVQFSNHTGYGLDKVFGTITRETDLKELLSGLFDNFSQDYQALLSGYLPNKNSVRCMGTYYAKFKEANPEMIWLMDPVMGDEGQLYVSEDVIPEYRKLALSPKQLVDIITPNQFELEILYGGEIKTKEHLKKALKKLHQTIPVIIVTSCDCKMFDDKDFIYCVASMEGKTPIVYRVPFIDSYFTGVGDLFSALLLDRVYKILSNPTTTLKFEDQVNNVLNVIQKVLKITRSYASGKMKAKMGSALEMKEMELRLIESRDIYETINIHQTDYIYARL.

Residues Ser-9, Thr-44, and Tyr-122 each contribute to the substrate site. ATP is bound by residues 183 to 184 and 211 to 223; these read TS and RVPF…TGVG. Residue Asp-224 participates in substrate binding.

It belongs to the pyridoxine kinase family. A divalent metal cation is required as a cofactor.

Its subcellular location is the cytoplasm. It localises to the nucleus. It carries out the reaction pyridoxal + ATP = pyridoxal 5'-phosphate + ADP + H(+). Its function is as follows. Required for synthesis of pyridoxal-5-phosphate from vitamin B6. Important for bud site selection. This chain is Putative pyridoxal kinase BUD16 (BUD16), found in Saccharomyces cerevisiae (strain ATCC 204508 / S288c) (Baker's yeast).